The primary structure comprises 251 residues: tRNA (guanine-N(7)-)-methyltransferase (251 aa).

The interval 1-29 (MTQTLSSQDPQAPAAPPMPGAAGSAPADV) is disordered. The S-adenosyl-L-methionine site is built by Glu84, Glu109, Asp136, and Asp159. The active site involves Asp159. Lys163 provides a ligand contact to substrate. Residues 165 to 170 (RHNKRR) are interaction with RNA. Residues Asp195 and 230–233 (TKFE) each bind substrate.

This sequence belongs to the class I-like SAM-binding methyltransferase superfamily. TrmB family.

The catalysed reaction is guanosine(46) in tRNA + S-adenosyl-L-methionine = N(7)-methylguanosine(46) in tRNA + S-adenosyl-L-homocysteine. It participates in tRNA modification; N(7)-methylguanine-tRNA biosynthesis. Functionally, catalyzes the formation of N(7)-methylguanine at position 46 (m7G46) in tRNA. The protein is tRNA (guanine-N(7)-)-methyltransferase of Acidovorax sp. (strain JS42).